Consider the following 98-residue polypeptide: Protein translation factor SUI1 homolog (98 aa).

Belongs to the SUI1 family.

This Thermococcus gammatolerans (strain DSM 15229 / JCM 11827 / EJ3) protein is Protein translation factor SUI1 homolog.